We begin with the raw amino-acid sequence, 83 residues long: Weak neurotoxin WNTX33 (83 aa).

Residues 1 to 21 form the signal peptide; the sequence is MKTLLLTLVVVTIVCLDLGYS. Intrachain disulfides connect C24-C45, C38-C62, C64-C75, and C76-C81.

The protein belongs to the three-finger toxin family. Short-chain subfamily. As to expression, expressed by the venom gland.

The protein resides in the secreted. This chain is Weak neurotoxin WNTX33, found in Ophiophagus hannah (King cobra).